The primary structure comprises 342 residues: Peroxisomal membrane protein import receptor PEX19 (342 aa).

Residues 1–18 are compositionally biased toward acidic residues; it reads MNENEYDNFDDLDDLLDE. Disordered regions lie at residues 1–68 and 119–141; these read MNEN…DPEL and CSSL…GFKN. Positions 41 to 54 are enriched in basic and acidic residues; the sequence is SENKEKNAESKDSD. Residue Ser-62 is modified to Phosphoserine. Ser-304 is modified (phosphoserine). A disordered region spans residues 321 to 342; sequence IDGNDPNLGNLDKELTDGCKQQ. Residues 331–342 are compositionally biased toward basic and acidic residues; the sequence is LDKELTDGCKQQ. The residue at position 339 (Cys-339) is a Cysteine methyl ester. Cys-339 carries the S-farnesyl cysteine lipid modification. Positions 340–342 are cleaved as a propeptide — removed in mature form; that stretch reads KQQ.

This sequence belongs to the peroxin-19 family. Interacts (farnesylated) with PEX3; farnesylation is required for this interaction. Interacts with PEX2, PEX5, PEX10, PEX11, PEX12, PEX13, PEX14, PEX17, PEX22, PEX25, PEX30 and PEX32; the interaction requires well-defined PEX19-binding sites within the peroxisomal membrane protein targeting signal (mPTS) of the PMPs and is independent on the presence of PEX3. Interacts with VPS1.

The protein resides in the cytoplasm. The protein localises to the peroxisome membrane. It localises to the endoplasmic reticulum membrane. In terms of biological role, required for proper post-translational import and stabilization of peroxisomal membrane proteins (PMPs). Acts as a cytosolic import receptor for PMPs and delivers them to the docking factor PEX3 at the peroxisomal membrane for subsequent insertion into the membrane. Acts as a chaperone in stabilizing or maintaining PMPs in the lipid bilayer. Directs PEX17, a peripheral component of the peroxisomal matrix protein translocation machinery, to peroxisomes. Stabilizes VPS1, a protein required for peroxisomal fission, at the peroxisomal membrane. Also acts in conjunction with PEX3 in the formation of peroxisomes from preperoxisomal compartments at the endoplasmic reticulum during de novo peroxisome synthesis, probably via the import of additional PMPs. In Saccharomyces cerevisiae (strain ATCC 204508 / S288c) (Baker's yeast), this protein is Peroxisomal membrane protein import receptor PEX19 (PEX19).